We begin with the raw amino-acid sequence, 232 residues long: Ornithine carbamoyltransferase (232 aa).

Residues Gln-15, Arg-39, and 66–69 contribute to the carbamoyl phosphate site; that span reads HPTQ. Residues Asn-99, Asp-163, and 167–168 each bind L-ornithine; that span reads SM. Carbamoyl phosphate contacts are provided by residues 204-207 and Thr-232; that span reads HCLP.

This sequence belongs to the aspartate/ornithine carbamoyltransferase superfamily. OTCase family.

It is found in the cytoplasm. It catalyses the reaction carbamoyl phosphate + L-ornithine = L-citrulline + phosphate + H(+). It participates in amino-acid biosynthesis; L-arginine biosynthesis; L-arginine from L-ornithine and carbamoyl phosphate: step 1/3. In terms of biological role, reversibly catalyzes the transfer of the carbamoyl group from carbamoyl phosphate (CP) to the N(epsilon) atom of ornithine (ORN) to produce L-citrulline. This Neisseria perflava protein is Ornithine carbamoyltransferase (argF).